The sequence spans 218 residues: Ras-related protein Rab-11B (218 aa).

An N-acetylglycine modification is found at glycine 2. The residue at position 4 (arginine 4) is a Citrulline. 11 residues coordinate GTP: serine 20, glycine 21, glycine 23, lysine 24, serine 25, asparagine 26, asparagine 37, leucine 38, serine 40, serine 42, and threonine 43. Residue serine 25 coordinates Mg(2+). The Switch 1 motif lies at 36 to 47 (FNLESKSTIGVE). Residues threonine 43 and aspartate 66 each contribute to the Mg(2+) site. The short motif at 67–86 (TAGQERYRAITSAYYRGAVG) is the Switch 2 element. Positions 69, 124, 125, 127, 155, and 156 each coordinate GTP. Residues 184 to 218 (RAAHDESPGNNVVDISVPPTTDGQKPNKLQCCQNL) are disordered. 2 S-geranylgeranyl cysteine lipidation sites follow: cysteine 214 and cysteine 215. Cysteine 215 is subject to Cysteine methyl ester. A propeptide spans 216–218 (QNL) (removed in mature form).

Belongs to the small GTPase superfamily. Rab family. Interacts with KCNMA1. Interacts with RAB11FIP1, RAB11FIP2, RAB11FIP3 and RAB11FIP4. May interact with TBC1D14. Interacts with ATP6V1E1. Interacts with PI4KB. Interacts (GDP-bound form) with ZFYVE27. Interacts (GDP-bound form) with KIF5A in a ZFYVE27-dependent manner. Interacts with RELCH. Interacts (in GTP-bound form) with TBC1D8B (via domain Rab-GAP TBC). Forms a complex containing RAB11B, ASAP1, Rabin8/RAB3IP, RAP11FIP3 and ARF4. Interacts with WDR44. It depends on Mg(2+) as a cofactor. Post-translationally, citrullinated by PADI4. (Microbial infection) Glycosylated on arginine residues by S.typhimurium protein Ssek3.

It is found in the recycling endosome membrane. The protein resides in the cytoplasmic vesicle. The protein localises to the secretory vesicle. It localises to the synaptic vesicle membrane. Its subcellular location is the phagosome membrane. It carries out the reaction GTP + H2O = GDP + phosphate + H(+). Its activity is regulated as follows. Regulated by guanine nucleotide exchange factors (GEFs) which promote the exchange of bound GDP for free GTP. Regulated by GTPase activating proteins (GAPs) which increase the GTP hydrolysis activity. Inhibited by GDP dissociation inhibitors (GDIs) which prevent Rab-GDP dissociation. The small GTPases Rab are key regulators of intracellular membrane trafficking, from the formation of transport vesicles to their fusion with membranes. Rabs cycle between an inactive GDP-bound form and an active GTP-bound form that is able to recruit to membranes different set of downstream effectors directly responsible for vesicle formation, movement, tethering and fusion. The small Rab GTPase RAB11B plays a role in endocytic recycling, regulating apical recycling of several transmembrane proteins including cystic fibrosis transmembrane conductance regulator/CFTR, epithelial sodium channel/ENaC, potassium voltage-gated channel, and voltage-dependent L-type calcium channel. May also regulate constitutive and regulated secretion, like insulin granule exocytosis. Required for melanosome transport and release from melanocytes. Also regulates V-ATPase intracellular transport in response to extracellular acidosis. Promotes Rabin8/RAB3IP preciliary vesicular trafficking to mother centriole by forming a ciliary targeting complex containing Rab11, ASAP1, Rabin8/RAB3IP, RAB11FIP3 and ARF4, thereby regulating ciliogenesis initiation. On the contrary, upon LPAR1 receptor signaling pathway activation, interaction with phosphorylated WDR44 prevents Rab11-RAB3IP-RAB11FIP3 complex formation and cilia growth. This Homo sapiens (Human) protein is Ras-related protein Rab-11B.